The following is a 230-amino-acid chain: Ureidoacrylate amidohydrolase RutB (230 aa).

Asp24 (proton acceptor) is an active-site residue. Lys133 is a catalytic residue. The active-site Nucleophile is the Cys166.

It belongs to the isochorismatase family. RutB subfamily.

The enzyme catalyses (Z)-3-ureidoacrylate + H2O + H(+) = (Z)-3-aminoacrylate + NH4(+) + CO2. The catalysed reaction is (Z)-3-ureidoacrylate + H2O = (Z)-3-aminoacrylate + carbamate + H(+). It catalyses the reaction (Z)-2-methylureidoacrylate + H2O + H(+) = (Z)-2-methylaminoacrylate + NH4(+) + CO2. Hydrolyzes ureidoacrylate to form aminoacrylate and carbamate. The carbamate hydrolyzes spontaneously, thereby releasing one of the nitrogen atoms of the pyrimidine ring as ammonia and one of its carbon atoms as CO2. The sequence is that of Ureidoacrylate amidohydrolase RutB from Escherichia coli O6:K15:H31 (strain 536 / UPEC).